The sequence spans 451 residues: Glutamyl-tRNA(Gln) amidotransferase subunit D (451 aa).

The interval 78 to 97 (PREAPTPGEEEGSQEDFGQP) is disordered. The Asparaginase/glutaminase domain occupies 99–432 (PRVFFVGTGG…EEIQRLFTAN (334 aa)). Catalysis depends on residues Thr-109, Thr-187, Asp-188, and Lys-266.

It belongs to the asparaginase 1 family. GatD subfamily. In terms of assembly, heterodimer of GatD and GatE.

The enzyme catalyses L-glutamyl-tRNA(Gln) + L-glutamine + ATP + H2O = L-glutaminyl-tRNA(Gln) + L-glutamate + ADP + phosphate + H(+). In terms of biological role, allows the formation of correctly charged Gln-tRNA(Gln) through the transamidation of misacylated Glu-tRNA(Gln) in organisms which lack glutaminyl-tRNA synthetase. The reaction takes place in the presence of glutamine and ATP through an activated gamma-phospho-Glu-tRNA(Gln). The GatDE system is specific for glutamate and does not act on aspartate. This Thermofilum pendens (strain DSM 2475 / Hrk 5) protein is Glutamyl-tRNA(Gln) amidotransferase subunit D.